The sequence spans 250 residues: tRNA (guanine-N(1)-)-methyltransferase (250 aa).

Residues G108 and 127-132 (LGDFVL) contribute to the S-adenosyl-L-methionine site.

It belongs to the RNA methyltransferase TrmD family. In terms of assembly, homodimer.

It localises to the cytoplasm. The catalysed reaction is guanosine(37) in tRNA + S-adenosyl-L-methionine = N(1)-methylguanosine(37) in tRNA + S-adenosyl-L-homocysteine + H(+). Functionally, specifically methylates guanosine-37 in various tRNAs. The polypeptide is tRNA (guanine-N(1)-)-methyltransferase (Streptococcus agalactiae serotype Ia (strain ATCC 27591 / A909 / CDC SS700)).